Here is a 140-residue protein sequence, read N- to C-terminus: Endoribonuclease YbeY (140 aa).

Residues H105, H109, and D115 each coordinate Zn(2+).

The protein belongs to the endoribonuclease YbeY family. Zn(2+) is required as a cofactor.

Its subcellular location is the cytoplasm. Single strand-specific metallo-endoribonuclease involved in late-stage 70S ribosome quality control and in maturation of the 3' terminus of the 16S rRNA. This chain is Endoribonuclease YbeY, found in Flavobacterium psychrophilum (strain ATCC 49511 / DSM 21280 / CIP 103535 / JIP02/86).